The following is a 1242-amino-acid chain: Structural polyprotein (1242 aa).

The tract at residues 1-36 (MFPYPTLNYSPMAPVNPMAYRDPNPPRRRWRPFRPP) is necessary for nucleocapsid assembly and virus assembly. Residues 1–104 (MFPYPTLNYS…KQKPGKRQRM (104 aa)) are disordered. A host transcription inhibition region spans residues 37-70 (LAAQIEDLRRSIANLTFKQRAPNPPAGPPAKRKK). The short motif at 44 to 51 (LRRSIANL) is the Supraphysiological nuclear export signal element. Positions 66 to 104 (AKRKKPAPKPKPAAPKKKRQPPPAKKQKRKQKPGKRQRM) are enriched in basic residues. The Nuclear localization signal signature appears at 67-70 (KRKK). The tract at residues 83–113 (KRQPPPAKKQKRKQKPGKRQRMCMKLESDKT) is binding to the viral RNA. The tract at residues 98 to 112 (PGKRQRMCMKLESDK) is ribosome-binding. At Ser110 the chain carries Phosphoserine. Positions 112–261 (KTFPILLNGQ…KDTPEGSEPW (150 aa)) constitute a Peptidase S3 domain. A Phosphothreonine modification is found at Thr113. Active-site charge relay system residues include His138, Asp160, and Ser212. A functions as an uncleaved signal peptide for the precursor of protein E3/E2 region spans residues 262–273 (SLTTVMCVLANI). The N-linked (GlcNAc...) asparagine; by host glycan is linked to Asn272. Over 325–688 (DLETHFTQYK…YYYNRYPMTT (364 aa)) the chain is Extracellular. Residues 689–709 (IVGLCTCAAIIMVSCITSVWL) traverse the membrane as a helical segment. Residues 710 to 744 (LCRTRNLCITPYRLAPNAQVPILLAVLCCVKPTRA) are Cytoplasmic-facing. Residues Cys717, Cys737, and Cys738 are each lipidated (S-palmitoyl cysteine; by host). The transient transmembrane before p62-6K protein processing stretch occupies residues 717–737 (CITPYRLAPNAQVPILLAVLC). Topologically, residues 745–759 (DDTLQVLNYLWNNNQ) are extracellular. 2 consecutive transmembrane segments (helical) span residues 760–780 (NFFW…MRML) and 781–801 (RCLL…GAAA). Residues 802–1218 (YEHTAVMPNK…WSWLKVLVGS (417 aa)) are Extracellular-facing. 8 cysteine pairs are disulfide-bonded: Cys850–Cys915, Cys863–Cys895, Cys864–Cys897, Cys869–Cys879, Cys1061–Cys1073, Cys1103–Cys1178, Cys1108–Cys1182, and Cys1130–Cys1172. Residues 885–902 (VYPFMWGGAYCFCDTENT) form an E1 fusion peptide loop region. A helical membrane pass occupies residues 1219-1239 (TSAFIVLGLIATAVVALVLFT). Topologically, residues 1240-1242 (HKH) are cytoplasmic.

In terms of assembly, part of a tetrameric complex composed of host CRM1, host importin alpha/beta dimer and the viral capsid; this complex blocks the receptor-mediated transport through the nuclear pore. Interacts with host phosphatase PPP1CA; this interaction dephosphorylates the capsid protein, which increases its ability to bind to the viral genome. Interacts with host karyopherin KPNA4; this interaction allows the nuclear import of the viral capsid protein. Interacts with spike glycoprotein E2. Interacts with host IRAK1; the interaction leads to inhibition of IRAK1-dependent signaling. As to quaternary structure, the precursor of protein E3/E2 and E1 form a heterodimer shortly after synthesis. The precursor of protein E3/E2 and E1 form a heterodimer shortly after synthesis. Processing of the precursor of protein E3/E2 into E2 and E3 results in a heterodimer of the spike glycoproteins E2 and E1. Spike at virion surface are constituted of three E2-E1 heterodimers. After target cell attachment and endocytosis, E1 change conformation to form homotrimers. Interacts with 6K protein. In terms of assembly, processing of the precursor of protein E3/E2 into E2 and E3 results in a heterodimer of the spike glycoproteins E2 and E1. Spike at virion surface are constituted of three E2-E1 heterodimers. Interacts with 6K protein. As to quaternary structure, interacts with spike glycoprotein E1. Interacts with spike glycoprotein E2. In terms of processing, structural polyprotein: Specific enzymatic cleavages in vivo yield mature proteins. Capsid protein is auto-cleaved during polyprotein translation, unmasking a signal peptide at the N-terminus of the precursor of E3/E2. The remaining polyprotein is then targeted to the host endoplasmic reticulum, where host signal peptidase cleaves it into pE2, 6K and E1 proteins. pE2 is further processed to mature E3 and E2 by host furin in trans-Golgi vesicle. Post-translationally, phosphorylated on serine and threonine residues. Palmitoylated via thioester bonds. These palmitoylations may induce disruption of the C-terminus transmembrane. This would result in the reorientation of E2 C-terminus from lumenal to cytoplasmic side. In terms of processing, N-glycosylated. Post-translationally, palmitoylated via thioester bonds.

Its subcellular location is the virion. It localises to the host cytoplasm. It is found in the host cell membrane. The protein localises to the host nucleus. The protein resides in the virion membrane. The catalysed reaction is Autocatalytic release of the core protein from the N-terminus of the togavirus structural polyprotein by hydrolysis of a -Trp-|-Ser- bond.. Functionally, forms an icosahedral capsid with a T=4 symmetry composed of 240 copies of the capsid protein surrounded by a lipid membrane through which penetrate 80 spikes composed of trimers of E1-E2 heterodimers. The capsid protein binds to the viral RNA genome at a site adjacent to a ribosome binding site for viral genome translation following genome release. Possesses a protease activity that results in its autocatalytic cleavage from the nascent structural protein. Following its self-cleavage, the capsid protein transiently associates with ribosomes, and within several minutes the protein binds to viral RNA and rapidly assembles into icosahedric core particles. The resulting nucleocapsid eventually associates with the cytoplasmic domain of the spike glycoprotein E2 at the cell membrane, leading to budding and formation of mature virions. In case of infection, new virions attach to target cells and after clathrin-mediated endocytosis their membrane fuses with the host endosomal membrane. This leads to the release of the nucleocapsid into the cytoplasm, followed by an uncoating event necessary for the genomic RNA to become accessible. The uncoating might be triggered by the interaction of capsid proteins with ribosomes. Binding of ribosomes would release the genomic RNA since the same region is genomic RNA-binding and ribosome-binding. Specifically inhibits interleukin-1 receptor-associated kinase 1/IRAK1-dependent signaling during viral entry, representing a means by which the alphaviruses may evade innate immune detection and activation prior to viral gene expression. Inhibits host transcription. Forms a tetrameric complex with XPO1/CRM1 and the nuclear import receptor importin. This complex blocks the central channel of host nuclear pores thereby inhibiting the receptor-mediated nuclear transport and thus the host mRNA and rRNA transcription. The inhibition of transcription is linked to a cytopathic effect on the host cell. Its function is as follows. Provides the signal sequence for the translocation of the precursor of protein E3/E2 to the host endoplasmic reticulum. Furin-cleaved E3 remains associated with spike glycoprotein E1 and mediates pH protection of the latter during the transport via the secretory pathway. After virion release from the host cell, the assembly protein E3 is gradually released in the extracellular space. Plays a role in viral attachment to target host cell, by binding to the cell receptor. Synthesized as a p62 precursor which is processed by furin at the cell membrane just before virion budding, giving rise to E2-E1 heterodimer. The p62-E1 heterodimer is stable, whereas E2-E1 is unstable and dissociate at low pH. p62 is processed at the last step, presumably to avoid E1 fusion activation before its final export to cell surface. E2 C-terminus contains a transitory transmembrane that would be disrupted by palmitoylation, resulting in reorientation of the C-terminal tail from lumenal to cytoplasmic side. This step is critical since E2 C-terminus is involved in budding by interacting with capsid proteins. This release of E2 C-terminus in cytoplasm occurs lately in protein export, and precludes premature assembly of particles at the endoplasmic reticulum membrane. In terms of biological role, constitutive membrane protein involved in virus glycoprotein processing, cell permeabilization, and the budding of viral particles. Disrupts the calcium homeostasis of the cell, probably at the endoplasmic reticulum level. This leads to cytoplasmic calcium elevation. Because of its lipophilic properties, the 6K protein is postulated to influence the selection of lipids that interact with the transmembrane domains of the glycoproteins, which, in turn, affects the deformability of the bilayer required for the extreme curvature that occurs as budding proceeds. Present in low amount in virions, about 3% compared to viral glycoproteins. Functionally, class II viral fusion protein. Fusion activity is inactive as long as E1 is bound to E2 in mature virion. After virus attachment to target cell and endocytosis, acidification of the endosome would induce dissociation of E1/E2 heterodimer and concomitant trimerization of the E1 subunits. This E1 trimer is fusion active, and promotes release of viral nucleocapsid in cytoplasm after endosome and viral membrane fusion. Efficient fusion requires the presence of cholesterol and sphingolipid in the target membrane. Fusion is optimal at levels of about 1 molecule of cholesterol per 2 molecules of phospholipids, and is specific for sterols containing a 3-beta-hydroxyl group. This chain is Structural polyprotein, found in Aedes (Human).